A 266-amino-acid chain; its full sequence is Putative carbamate hydrolase RutD (266 aa).

The protein belongs to the AB hydrolase superfamily. Hydrolase RutD family.

The enzyme catalyses carbamate + 2 H(+) = NH4(+) + CO2. Its function is as follows. Involved in pyrimidine catabolism. May facilitate the hydrolysis of carbamate, a reaction that can also occur spontaneously. This Escherichia coli (strain B / BL21-DE3) protein is Putative carbamate hydrolase RutD.